Reading from the N-terminus, the 624-residue chain is Phosphomethylpyrimidine synthase (624 aa).

Residues 40 to 61 (VPMRKISQSDTPTNTGREKNPP) form a disordered region. Over residues 45–54 (ISQSDTPTNT) the composition is skewed to polar residues. Substrate contacts are provided by residues Asn229, Met258, Tyr287, His323, 343–345 (SRG), 384–387 (DGLR), and Glu423. A Zn(2+)-binding site is contributed by His427. Tyr450 is a substrate binding site. Residue His491 participates in Zn(2+) binding. [4Fe-4S] cluster-binding residues include Cys571, Cys574, and Cys579.

Belongs to the ThiC family. Homodimer. Requires [4Fe-4S] cluster as cofactor.

It catalyses the reaction 5-amino-1-(5-phospho-beta-D-ribosyl)imidazole + S-adenosyl-L-methionine = 4-amino-2-methyl-5-(phosphooxymethyl)pyrimidine + CO + 5'-deoxyadenosine + formate + L-methionine + 3 H(+). The protein operates within cofactor biosynthesis; thiamine diphosphate biosynthesis. In terms of biological role, catalyzes the synthesis of the hydroxymethylpyrimidine phosphate (HMP-P) moiety of thiamine from aminoimidazole ribotide (AIR) in a radical S-adenosyl-L-methionine (SAM)-dependent reaction. This is Phosphomethylpyrimidine synthase from Methylococcus capsulatus (strain ATCC 33009 / NCIMB 11132 / Bath).